The sequence spans 574 residues: Dihydroxy-acid dehydratase 2 (574 aa).

A disordered region spans residues 1-20 (MNAKTNIKQRLPSRHVTEGP). Cysteine 56 serves as a coordination point for [2Fe-2S] cluster. Aspartate 88 lines the Mg(2+) pocket. Residue cysteine 129 coordinates [2Fe-2S] cluster. Mg(2+)-binding residues include aspartate 130 and lysine 131. Lysine 131 is subject to N6-carboxylysine. A [2Fe-2S] cluster-binding site is contributed by cysteine 201. Residue glutamate 451 participates in Mg(2+) binding. The active-site Proton acceptor is serine 477.

This sequence belongs to the IlvD/Edd family. Homodimer. Requires [2Fe-2S] cluster as cofactor. Mg(2+) serves as cofactor.

The catalysed reaction is (2R)-2,3-dihydroxy-3-methylbutanoate = 3-methyl-2-oxobutanoate + H2O. It carries out the reaction (2R,3R)-2,3-dihydroxy-3-methylpentanoate = (S)-3-methyl-2-oxopentanoate + H2O. It functions in the pathway amino-acid biosynthesis; L-isoleucine biosynthesis; L-isoleucine from 2-oxobutanoate: step 3/4. The protein operates within amino-acid biosynthesis; L-valine biosynthesis; L-valine from pyruvate: step 3/4. Functions in the biosynthesis of branched-chain amino acids. Catalyzes the dehydration of (2R,3R)-2,3-dihydroxy-3-methylpentanoate (2,3-dihydroxy-3-methylvalerate) into 2-oxo-3-methylpentanoate (2-oxo-3-methylvalerate) and of (2R)-2,3-dihydroxy-3-methylbutanoate (2,3-dihydroxyisovalerate) into 2-oxo-3-methylbutanoate (2-oxoisovalerate), the penultimate precursor to L-isoleucine and L-valine, respectively. This chain is Dihydroxy-acid dehydratase 2, found in Bradyrhizobium diazoefficiens (strain JCM 10833 / BCRC 13528 / IAM 13628 / NBRC 14792 / USDA 110).